Reading from the N-terminus, the 334-residue chain is MIEADRLIQPQLQGQDDVIDRAMRPKLLDEYTGQDDTRAQLKVFIQAAKNREEALDHMLIYGPPGLGKTTLAMIVANEMGVNIKSTSGPVLEKAGDLAALLTNLEAGDVLFIDEIHRLSPVVEEILYPAMEDYQLDIMIGEGPAARSIKLDLPPFTLVGATTRAGALTSPLRARFGIPLRLEFYNVKDLSTIVTRSAQVMGLAIDSEGATEIAKRSRGTPRIANRLLRRVRDYAEVKHDGAVTKKVAEHALDLLDVDGEGFDYMDRKLLLAIIDKFMGGPVGLDNLAAAIGEERETIEDVLEPFLIQQGFIQRTPRGRIATTRAYLHFGMIKPE.

The tract at residues 4–184 (ADRLIQPQLQ…FGIPLRLEFY (181 aa)) is large ATPase domain (RuvB-L). Residues Arg-24, Gly-65, Lys-68, Thr-69, Thr-70, 131–133 (EDY), Arg-174, Tyr-184, and Arg-221 contribute to the ATP site. Residue Thr-69 coordinates Mg(2+). The small ATPAse domain (RuvB-S) stretch occupies residues 185-255 (NVKDLSTIVT…VAEHALDLLD (71 aa)). The segment at 258-334 (GEGFDYMDRK…YLHFGMIKPE (77 aa)) is head domain (RuvB-H). Positions 294, 313, and 318 each coordinate DNA.

It belongs to the RuvB family. As to quaternary structure, homohexamer. Forms an RuvA(8)-RuvB(12)-Holliday junction (HJ) complex. HJ DNA is sandwiched between 2 RuvA tetramers; dsDNA enters through RuvA and exits via RuvB. An RuvB hexamer assembles on each DNA strand where it exits the tetramer. Each RuvB hexamer is contacted by two RuvA subunits (via domain III) on 2 adjacent RuvB subunits; this complex drives branch migration. In the full resolvosome a probable DNA-RuvA(4)-RuvB(12)-RuvC(2) complex forms which resolves the HJ.

The protein resides in the cytoplasm. It carries out the reaction ATP + H2O = ADP + phosphate + H(+). The RuvA-RuvB-RuvC complex processes Holliday junction (HJ) DNA during genetic recombination and DNA repair, while the RuvA-RuvB complex plays an important role in the rescue of blocked DNA replication forks via replication fork reversal (RFR). RuvA specifically binds to HJ cruciform DNA, conferring on it an open structure. The RuvB hexamer acts as an ATP-dependent pump, pulling dsDNA into and through the RuvAB complex. RuvB forms 2 homohexamers on either side of HJ DNA bound by 1 or 2 RuvA tetramers; 4 subunits per hexamer contact DNA at a time. Coordinated motions by a converter formed by DNA-disengaged RuvB subunits stimulates ATP hydrolysis and nucleotide exchange. Immobilization of the converter enables RuvB to convert the ATP-contained energy into a lever motion, pulling 2 nucleotides of DNA out of the RuvA tetramer per ATP hydrolyzed, thus driving DNA branch migration. The RuvB motors rotate together with the DNA substrate, which together with the progressing nucleotide cycle form the mechanistic basis for DNA recombination by continuous HJ branch migration. Branch migration allows RuvC to scan DNA until it finds its consensus sequence, where it cleaves and resolves cruciform DNA. This is Holliday junction branch migration complex subunit RuvB from Shewanella sp. (strain MR-4).